The following is a 279-amino-acid chain: MTTRIDRRMAKLKTEGRPALVTYFMGGDPDYDTSLSIMKALPGAGSDIIELGMPFSDPMADGPAIQAAGLRALKGGQTLVKTLKMASEFRAGDNETPIVLMGYYNPIYIYGVDRFLKDALASGIDGLIVVDLPPEMDEELCIPALKAGINFIRLATPTTDDKRLPKVLQNTSGFVYYVSMTGITGSALADTGKVAAAVNRIKGHTDLPVCVGFGVKTAEQARVIGANADGVVVGTAIVNAVANVLGPKGEKTADPAEAVATLVSGLAQGVRSARLAAAE.

Active-site proton acceptor residues include glutamate 50 and aspartate 61.

Belongs to the TrpA family. Tetramer of two alpha and two beta chains.

It catalyses the reaction (1S,2R)-1-C-(indol-3-yl)glycerol 3-phosphate + L-serine = D-glyceraldehyde 3-phosphate + L-tryptophan + H2O. The protein operates within amino-acid biosynthesis; L-tryptophan biosynthesis; L-tryptophan from chorismate: step 5/5. The alpha subunit is responsible for the aldol cleavage of indoleglycerol phosphate to indole and glyceraldehyde 3-phosphate. The polypeptide is Tryptophan synthase alpha chain (Mesorhizobium japonicum (strain LMG 29417 / CECT 9101 / MAFF 303099) (Mesorhizobium loti (strain MAFF 303099))).